The following is a 434-amino-acid chain: Xylose isomerase (434 aa).

Active-site residues include histidine 100 and aspartate 103. Mg(2+) is bound by residues glutamate 231, glutamate 267, histidine 270, aspartate 295, aspartate 306, aspartate 308, and aspartate 338.

The protein belongs to the xylose isomerase family. Homotetramer. The cofactor is Mg(2+).

The protein resides in the cytoplasm. It carries out the reaction alpha-D-xylose = alpha-D-xylulofuranose. The chain is Xylose isomerase from Ruegeria pomeroyi (strain ATCC 700808 / DSM 15171 / DSS-3) (Silicibacter pomeroyi).